The primary structure comprises 394 residues: Salivary plasminogen activator gamma (394 aa).

The first 36 residues, 1-36, serve as a signal peptide directing secretion; the sequence is MVNTMKTKLLCVLLLCGAVFSLPRQETYRQLARGSR. The Kringle domain occupies 45–126; the sequence is CYKDQGVTYR…TSESCSVPVC (82 aa). 9 disulfides stabilise this stretch: C45–C126, C66–C108, C97–C121, C131–C262, C174–C190, C182–C251, C276–C351, C308–C324, and C341–C369. The region spanning 143 to 393 is the Peptidase S1 domain; sequence STGGLFTDIT…YLGWIRDNMR (251 aa). Active-site charge relay system residues include H189 and D238. N315 carries N-linked (GlcNAc...) asparagine glycosylation. S345 serves as the catalytic Charge relay system.

This sequence belongs to the peptidase S1 family. Monomer.

It is found in the secreted. It carries out the reaction Specific cleavage of Arg-|-Val bond in plasminogen to form plasmin.. Probably essential to support the feeding habits of this exclusively haematophagous animal. Probable potent thrombolytic agent. The protein is Salivary plasminogen activator gamma of Desmodus rotundus (Vampire bat).